A 338-amino-acid chain; its full sequence is mRNA decay activator protein ZFP36L1 (338 aa).

Positions 1–111 (MTTTLVSATI…QKQPGGGQVN (111 aa)) are necessary and sufficient for the association with mRNA decay enzymes and mRNA decay activation. Phosphoserine; by MAPKAPK2 is present on Ser-54. Position 90 is a phosphoserine; by PKB/AKT1 (Ser-90). The residue at position 92 (Ser-92) is a Phosphoserine; by PKB/AKT1 and MAPKAPK2. Positions 93–113 (EGGERLLPTQKQPGGGQVNSS) are disordered. 2 consecutive C3H1-type zinc fingers follow at residues 114-142 (RYKTELCRPFEENGACKYGDKCQFAHGIH) and 152-180 (KYKTELCRTFHTIGFCPYGPRCHFIHNAE). The interval 185–338 (LAGARDLSAD…IFSRLSISDD (154 aa)) is necessary for mRNA decay activation. At Ser-203 the chain carries Phosphoserine; by PKB/AKT1 and MAPKAPK2. Residues 273–338 (SPTTFLFRPM…IFSRLSISDD (66 aa)) are disordered. Residues 296 to 318 (QDSLSDQEGYLSSSSSSHSGSDS) are compositionally biased toward low complexity. Ser-318 carries the post-translational modification Phosphoserine. Ser-334 bears the Phosphoserine; by RPS6KA1 mark.

As to quaternary structure, associates with the cytoplasmic CCR4-NOT deadenylase and RNA exosome complexes to trigger ARE-containing mRNA deadenylation and decay processes. Interacts with CNOT1. Interacts (via N-terminus) with CNOT6. Interacts with CNOT7; this interaction is inhibited in response to phorbol 12-myristate 13-acetate (PMA) treatment in a p38 MAPK-dependent manner. Interacts with DCP1A. Interacts (via N-terminus) with DCP2. Interacts (via N-terminus) with EXOSC2. Interacts with XRN1. Interacts (via phosphorylated form) with YWHAB; this interaction occurs in a protein kinase AKT1-dependent manner. Interacts (via phosphorylated form) with YWHAZ; this interaction occurs in a p38 MAPK- and AKT-signaling pathways. Phosphorylated. Phosphorylated by RPS6KA1 at Ser-334 upon phorbol 12-myristate 13-acetate (PMA) treatment; this phosphorylation results in dissociation of the CCR4-NOT deadenylase complex and induces p38 MAPK-mediated stabilization of the low-density lipoprotein receptor LDLR mRNA. Phosphorylated by protein kinase AKT1 at Ser-92 and Ser-203 in response to insulin; these phosphorylations stabilize ZFP36L1, increase the association with 14-3-3 proteins and mediate ARE-containing mRNA stabilization. AKT1-mediated phosphorylation at Ser-92 does not impair ARE-containing RNA-binding. Phosphorylated at Ser-54, Ser-92 and Ser-203 by MAPKAPK2; these phosphorylations increase the association with 14-3-3 proteins and mediate ARE-containing mRNA stabilization in a protein kinase AKT1-independent manner. MAPKAPK2-mediated phosphorylations at Ser-54, Ser-92 and Ser-203 do not impair ARE-containing RNA-binding. Phosphorylations increase the association with 14-3-3 proteins and mediate ARE-containing mRNA stabilization during early adipogenesis in a p38 MAPK- and AKT-dependent manner. Post-translationally, ubiquitinated. Ubiquitination leads to proteasomal degradation, a process inhibited by phosphorylations at Ser-90, Ser-92 and Ser-203. Expressed mainly in the basal epidermal layer, weakly in the suprabasal epidermal layers. Expressed in epidermal keratinocytes (at protein level). Expressed in osteoblasts.

Its subcellular location is the nucleus. It is found in the cytoplasm. The protein resides in the cytoplasmic granule. It localises to the P-body. Functionally, zinc-finger RNA-binding protein that destabilizes several cytoplasmic AU-rich element (ARE)-containing mRNA transcripts by promoting their poly(A) tail removal or deadenylation, and hence provide a mechanism for attenuating protein synthesis. Acts as a 3'-untranslated region (UTR) ARE mRNA-binding adapter protein to communicate signaling events to the mRNA decay machinery. Functions by recruiting the CCR4-NOT deadenylase complex and components of the cytoplasmic RNA decay machinery to the bound ARE-containing mRNAs, and hence promotes ARE-mediated mRNA deadenylation and decay processes. Also induces the degradation of ARE-containing mRNAs even in absence of poly(A) tail. Binds to 3'-UTR ARE of numerous mRNAs. Positively regulates early adipogenesis by promoting ARE-mediated mRNA decay of immediate early genes (IEGs). Promotes ARE-mediated mRNA decay of mineralocorticoid receptor NR3C2 mRNA in response to hypertonic stress. Negatively regulates hematopoietic/erythroid cell differentiation by promoting ARE-mediated mRNA decay of the transcription factor STAT5B mRNA. Positively regulates monocyte/macrophage cell differentiation by promoting ARE-mediated mRNA decay of the cyclin-dependent kinase CDK6 mRNA. Promotes degradation of ARE-containing pluripotency-associated mRNAs in embryonic stem cells (ESCs), such as NANOG, through a fibroblast growth factor (FGF)-induced MAPK-dependent signaling pathway, and hence attenuates ESC self-renewal and positively regulates mesendoderm differentiation. May play a role in mediating pro-apoptotic effects in malignant B-cells by promoting ARE-mediated mRNA decay of BCL2 mRNA. In association with ZFP36L2 maintains quiescence on developing B lymphocytes by promoting ARE-mediated decay of several mRNAs encoding cell cycle regulators that help B cells progress through the cell cycle, and hence ensuring accurate variable-diversity-joining (VDJ) recombination and functional immune cell formation. Together with ZFP36L2 is also necessary for thymocyte development and prevention of T-cell acute lymphoblastic leukemia (T-ALL) transformation by promoting ARE-mediated mRNA decay of the oncogenic transcription factor NOTCH1 mRNA. Participates in the delivery of target ARE-mRNAs to processing bodies (PBs). In addition to its cytosolic mRNA-decay function, plays a role in the regulation of nuclear mRNA 3'-end processing; modulates mRNA 3'-end maturation efficiency of the DLL4 mRNA through binding with an ARE embedded in a weak noncanonical polyadenylation (poly(A)) signal in endothelial cells. Also involved in the regulation of stress granule (SG) and P-body (PB) formation and fusion. Plays a role in vasculogenesis and endocardial development. Plays a role in the regulation of keratinocyte proliferation, differentiation and apoptosis. Plays a role in myoblast cell differentiation. The protein is mRNA decay activator protein ZFP36L1 of Homo sapiens (Human).